A 293-amino-acid chain; its full sequence is uncharacterized protein (293 aa).

Residues M1–T58 enclose the HTH lysR-type domain. The H-T-H motif DNA-binding region spans F18–Q37.

The protein belongs to the LysR transcriptional regulatory family.

This is an uncharacterized protein from Escherichia coli (strain K12).